We begin with the raw amino-acid sequence, 515 residues long: Bifunctional purine biosynthesis protein PurH (515 aa).

The 145-residue stretch at 1–145 folds into the MGS-like domain; it reads MTKRALISVS…KNHASVTVVV (145 aa).

The protein belongs to the PurH family.

The enzyme catalyses (6R)-10-formyltetrahydrofolate + 5-amino-1-(5-phospho-beta-D-ribosyl)imidazole-4-carboxamide = 5-formamido-1-(5-phospho-D-ribosyl)imidazole-4-carboxamide + (6S)-5,6,7,8-tetrahydrofolate. It catalyses the reaction IMP + H2O = 5-formamido-1-(5-phospho-D-ribosyl)imidazole-4-carboxamide. Its pathway is purine metabolism; IMP biosynthesis via de novo pathway; 5-formamido-1-(5-phospho-D-ribosyl)imidazole-4-carboxamide from 5-amino-1-(5-phospho-D-ribosyl)imidazole-4-carboxamide (10-formyl THF route): step 1/1. It participates in purine metabolism; IMP biosynthesis via de novo pathway; IMP from 5-formamido-1-(5-phospho-D-ribosyl)imidazole-4-carboxamide: step 1/1. The polypeptide is Bifunctional purine biosynthesis protein PurH (Streptococcus pyogenes serotype M12 (strain MGAS2096)).